The following is a 419-amino-acid chain: Serine--tRNA ligase (419 aa).

T226–E228 contributes to the L-serine binding site. Residues R257–E259 and V273 each bind ATP. E280 serves as a coordination point for L-serine. E344–S347 contacts ATP. Position 379 (T379) interacts with L-serine.

The protein belongs to the class-II aminoacyl-tRNA synthetase family. Type-1 seryl-tRNA synthetase subfamily. Homodimer. The tRNA molecule binds across the dimer.

Its subcellular location is the cytoplasm. It carries out the reaction tRNA(Ser) + L-serine + ATP = L-seryl-tRNA(Ser) + AMP + diphosphate + H(+). It catalyses the reaction tRNA(Sec) + L-serine + ATP = L-seryl-tRNA(Sec) + AMP + diphosphate + H(+). It participates in aminoacyl-tRNA biosynthesis; selenocysteinyl-tRNA(Sec) biosynthesis; L-seryl-tRNA(Sec) from L-serine and tRNA(Sec): step 1/1. In terms of biological role, catalyzes the attachment of serine to tRNA(Ser). Is also able to aminoacylate tRNA(Sec) with serine, to form the misacylated tRNA L-seryl-tRNA(Sec), which will be further converted into selenocysteinyl-tRNA(Sec). In Mycobacterium marinum (strain ATCC BAA-535 / M), this protein is Serine--tRNA ligase.